Reading from the N-terminus, the 420-residue chain is Tyrosine--tRNA ligase (420 aa).

Tyr-36 contacts L-tyrosine. The 'HIGH' region signature appears at 41–50 (PTADSLHIGH). Positions 170 and 174 each coordinate L-tyrosine. A 'KMSKS' region motif is present at residues 231 to 235 (KFGKS). Lys-234 is a binding site for ATP. The S4 RNA-binding domain occupies 353–420 (TNIVEVLIET…KKKYFMVNYQ (68 aa)).

The protein belongs to the class-I aminoacyl-tRNA synthetase family. TyrS type 1 subfamily. In terms of assembly, homodimer.

It localises to the cytoplasm. It carries out the reaction tRNA(Tyr) + L-tyrosine + ATP = L-tyrosyl-tRNA(Tyr) + AMP + diphosphate + H(+). In terms of biological role, catalyzes the attachment of tyrosine to tRNA(Tyr) in a two-step reaction: tyrosine is first activated by ATP to form Tyr-AMP and then transferred to the acceptor end of tRNA(Tyr). The protein is Tyrosine--tRNA ligase of Staphylococcus aureus (strain bovine RF122 / ET3-1).